Here is a 646-residue protein sequence, read N- to C-terminus: Phosphomethylpyrimidine synthase (646 aa).

The segment covering Met1–Ala13 has biased composition (polar residues). Positions Met1–Ser21 are disordered. Substrate-binding positions include Asn221, Met250, Tyr279, His315, Ser335–Gly337, Asp376–Arg379, and Glu415. His419 is a Zn(2+) binding site. Tyr442 lines the substrate pocket. His483 serves as a coordination point for Zn(2+). 3 residues coordinate [4Fe-4S] cluster: Cys563, Cys566, and Cys571.

The protein belongs to the ThiC family. As to quaternary structure, homodimer. Requires [4Fe-4S] cluster as cofactor.

The catalysed reaction is 5-amino-1-(5-phospho-beta-D-ribosyl)imidazole + S-adenosyl-L-methionine = 4-amino-2-methyl-5-(phosphooxymethyl)pyrimidine + CO + 5'-deoxyadenosine + formate + L-methionine + 3 H(+). Its pathway is cofactor biosynthesis; thiamine diphosphate biosynthesis. Its function is as follows. Catalyzes the synthesis of the hydroxymethylpyrimidine phosphate (HMP-P) moiety of thiamine from aminoimidazole ribotide (AIR) in a radical S-adenosyl-L-methionine (SAM)-dependent reaction. In Rhodopseudomonas palustris (strain HaA2), this protein is Phosphomethylpyrimidine synthase.